Reading from the N-terminus, the 1445-residue chain is Tensin-3 (1445 aa).

A Phosphatase tensin-type domain is found at 1-170; the sequence is MEEGHGLDLT…QFLSGLLSGS (170 aa). Residues 175-301 form the C2 tensin-type domain; sequence ASPLFLHFVI…GKVELVFSAT (127 aa). Phosphothreonine is present on Thr323. Phosphoserine is present on residues Ser332 and Ser361. Positions 358 to 421 are disordered; sequence RKKSSSDPGI…GTRRGLSAQE (64 aa). The segment covering 386 to 400 has biased composition (polar residues); sequence TLSVSSDSGHSTASA. Residues Ser440 and Ser516 each carry the phosphoserine modification. The disordered stretch occupies residues 538 to 568; it reads VPDLGLGMDGPYERERTFGSREPKQPQPLLR. The span at 548 to 561 shows a compositional bias: basic and acidic residues; the sequence is PYERERTFGSREPK. Residue Ser571 is modified to Phosphoserine. 2 disordered regions span residues 618 to 695 and 717 to 769; these read DNPG…TLDI and PTHM…QPLG. Phosphothreonine is present on Thr632. Phosphoserine is present on residues Ser649, Ser660, Ser687, and Ser690. A compositionally biased stretch (polar residues) spans 723–733; the sequence is LGSQANGSVSP. 2 positions are modified to phosphoserine: Ser735 and Ser776. At Tyr780 the chain carries Phosphotyrosine. 3 positions are modified to phosphoserine: Ser811, Ser866, and Ser901. Disordered regions lie at residues 859–981 and 1076–1127; these read ALRH…TRKD and GHSS…PHSG. Positions 864-873 are enriched in pro residues; sequence PFSPPEPPLS. Residues 914-935 are compositionally biased toward polar residues; it reads ASSTPSFQQAFASSCTISSNGP. The segment covering 1099-1109 has biased composition (basic and acidic residues); sequence PEKKRASEGDR. The span at 1110-1127 shows a compositional bias: low complexity; it reads SLGSVSPSSSGFSSPHSG. Ser1149 and Ser1154 each carry phosphoserine. One can recognise an SH2 domain in the interval 1172–1282; that stretch reads WYKADISREQ…ALPCKLLIPE (111 aa). 2 positions are modified to phosphoserine: Ser1293 and Ser1441. Positions 1310–1444 constitute a PTB domain; that stretch reads ACNVWYLNSV…SKVMIGSPKK (135 aa).

This sequence belongs to the PTEN phosphatase protein family. As to quaternary structure, interacts with EGFR; EGF promotes the interaction with EGFR. Interacts with PTK2/FAK1 and BCAR1. Tyrosine phosphorylation is critical for these interactions. Interacts with Rho GTPase-activating protein DLC1 and with the regulatory p85 subunit of the PI3K kinase complex; in resting cells, interacts (via C2 tensin-type domain) with DLC1 but, following growth factor stimulation, TNS3 is phosphorylated which leads to weakened interaction with DLC1 and enhanced interaction (via C2 tensin-type domain) with p85 while DLC1 interaction with PTEN increases. Interacts (when phosphorylated on the SH2 domain) with integrins ITGB1, ITGB3 and ITGB5 and with scaffolding protein PEAK1 (phosphorylated on 'Tyr-635'); mediates the association of PEAK1 with ITGB1, ITGB3 and ITGB5. Interacts (via N-terminus) with DOCK5 (via N-terminus); the interaction increases DOCK5 guanine nucleotide exchange activity towards Rac. Interacts with receptor tyrosine kinase MET. Phosphorylated on Ser/Thr and Tyr residues. Phosphorylated on Thr-323 in the C2-type tensin domain following EGF stimulation which changes its binding preference from DLC1 to the p85 regulatory subunit of the PI3K kinase complex. EGF induces tyrosine phosphorylation in a time- and dose-dependent manner. Phosphorylation of the SH2 domain enhances interaction with PEAK1. Expressed in umbilical vein endothelial cells, epithelial cells, and fibroblasts cells (at protein level). Highly expressed in thyroid, kidney and placenta. Low expression in heart, skeletal muscle, spleen, liver, and lung. Expressed at higher levels in tonsil-derived mesenchymal stem cells (MSCs) than in adipose tissue-derived MSCs or bone marrow-derived MSCs. Expressed in tumor endothelial cells. Expression seems to be down-regulated in thyroid tumor tissues and in anaplastic carcinomas.

It localises to the cell junction. The protein localises to the focal adhesion. Its subcellular location is the cell projection. The protein resides in the podosome. May act as a protein phosphatase and/or a lipid phosphatase. Involved in the dissociation of the integrin-tensin-actin complex. EGF activates TNS4 and down-regulates TNS3 which results in capping the tail of ITGB1. Increases DOCK5 guanine nucleotide exchange activity towards Rac and plays a role in osteoclast podosome organization. Enhances RHOA activation in the presence of DLC1. Required for growth factor-induced epithelial cell migration; growth factor stimulation induces TNS3 phosphorylation which changes its binding preference from DLC1 to the p85 regulatory subunit of the PI3K kinase complex, displacing PI3K inhibitor PTEN and resulting in translocation of the TNS3-p85 complex to the leading edge of migrating cells to promote RAC1 activation. Meanwhile, PTEN switches binding preference from p85 to DLC1 and the PTEN-DLC1 complex translocates to the posterior of migrating cells to activate RHOA. Acts as an adapter protein by bridging the association of scaffolding protein PEAK1 with integrins ITGB1, ITGB3 and ITGB5 which contributes to the promotion of cell migration. Controls tonsil-derived mesenchymal stem cell proliferation and differentiation by regulating the activity of integrin ITGB1. In Homo sapiens (Human), this protein is Tensin-3 (TNS3).